The sequence spans 77 residues: Acyl carrier protein (77 aa).

The region spanning 2-77 is the Carrier domain; sequence STIEERVKKV…EAIDYVVAHQ (76 aa). An O-(pantetheine 4'-phosphoryl)serine modification is found at serine 37.

Belongs to the acyl carrier protein (ACP) family. In terms of processing, 4'-phosphopantetheine is transferred from CoA to a specific serine of apo-ACP by AcpS. This modification is essential for activity because fatty acids are bound in thioester linkage to the sulfhydryl of the prosthetic group.

The protein localises to the cytoplasm. The protein operates within lipid metabolism; fatty acid biosynthesis. Functionally, carrier of the growing fatty acid chain in fatty acid biosynthesis. This is Acyl carrier protein from Chromohalobacter salexigens (strain ATCC BAA-138 / DSM 3043 / CIP 106854 / NCIMB 13768 / 1H11).